A 230-amino-acid chain; its full sequence is Ribosomal RNA small subunit methyltransferase G (230 aa).

S-adenosyl-L-methionine contacts are provided by residues glycine 74, phenylalanine 79, 124–125 (AE), and arginine 141.

It belongs to the methyltransferase superfamily. RNA methyltransferase RsmG family.

The protein resides in the cytoplasm. Its function is as follows. Specifically methylates the N7 position of a guanine in 16S rRNA. The polypeptide is Ribosomal RNA small subunit methyltransferase G (Acholeplasma laidlawii (strain PG-8A)).